The following is a 126-amino-acid chain: Holo-[acyl-carrier-protein] synthase (126 aa).

Mg(2+)-binding residues include Asp9 and Glu58.

Belongs to the P-Pant transferase superfamily. AcpS family. Mg(2+) is required as a cofactor.

It is found in the cytoplasm. The enzyme catalyses apo-[ACP] + CoA = holo-[ACP] + adenosine 3',5'-bisphosphate + H(+). In terms of biological role, transfers the 4'-phosphopantetheine moiety from coenzyme A to a Ser of acyl-carrier-protein. In Vibrio campbellii (strain ATCC BAA-1116), this protein is Holo-[acyl-carrier-protein] synthase.